A 592-amino-acid chain; its full sequence is MAWLIYFFEEPISIHLGTWFSVGDIQVNYGTLLDSLSMVVMVPVGIVTLSVLIYAIDYMRYDPNRNRFYIILSVFAIFMTVLVISDNYIMMFMGWEFVGVVSYLLISFWNTRIAAMKSALSAILLNRMGDTLFVICIGTMLSYFHAVDFETMELMTPHTDTYMLNLMAMMLLMAATAKSAQLGLHGWLLSAMEGPTPVSALTHAATMVCSGVFVLVRSSFMLEYTPSMLLVMLWLAGFTTLMSGLMAVVSNDMKRVMALSTMSQLAMMMLAMGSSAYDLAMYHLYCHAFFKALLFMSAGSIMHSYMSETQDMRKYGGLINYLPFSYTTMLMASLSLMAMPGLTGYYSKDIIMESLYGTYTVSGYIMYYIATASATLTAIYSLRVTYLTFYNVPRSNKYTFAHVHESTHMAMPMFILTIYSMFLGYARDNVTFHLVMGLPHTNSFIETEYTLPAMFKLLPLMLGLSLSLTTVYMYEFTYKMSKSSVYNYFNQRIYYDQLTNNLIMRPVLKLGGATNAYTDNGLLRVLGSTGMSRALINIPVLLMMNMTYTFIVFFTYMKYFYIIPATRGRKLYMILYTKCMINIFHTPEAGII.

The next 14 membrane-spanning stretches (helical) occupy residues 36 to 56 (LSMV…IYAI), 68 to 88 (FYII…SDNY), 89 to 109 (IMMF…ISFW), 132 to 152 (LFVI…FETM), 169 to 189 (MMLL…GWLL), 196 to 216 (TPVS…FVLV), 229 to 249 (LLVM…MAVV), 256 to 276 (VMAL…GSSA), 279 to 299 (LAMY…MSAG), 322 to 342 (LPFS…MPGL), 364 to 386 (YIMY…RVTY), 406 to 426 (STHM…LGYA), 451 to 471 (LPAM…LTTV), and 534 to 554 (ALIN…IVFF).

The protein belongs to the complex I subunit 5 family.

Its subcellular location is the mitochondrion inner membrane. It catalyses the reaction a ubiquinone + NADH + 5 H(+)(in) = a ubiquinol + NAD(+) + 4 H(+)(out). Its function is as follows. Core subunit of the mitochondrial membrane respiratory chain NADH dehydrogenase (Complex I) that is believed to belong to the minimal assembly required for catalysis. Complex I functions in the transfer of electrons from NADH to the respiratory chain. The immediate electron acceptor for the enzyme is believed to be ubiquinone. In Debaryomyces hansenii (strain ATCC 36239 / CBS 767 / BCRC 21394 / JCM 1990 / NBRC 0083 / IGC 2968) (Yeast), this protein is NADH-ubiquinone oxidoreductase chain 5 (ND5).